The chain runs to 409 residues: Phosphatidylserine decarboxylase proenzyme, mitochondrial (409 aa).

Residues Met1 to Lys52 constitute a mitochondrion transit peptide. The segment at Gln36–Ala103 is necessary for localization to both lipid droplets and mitochondria. The Mitochondrial matrix segment spans residues Ile53–Leu63. The chain crosses the membrane as a helical span at residues Leu64–Gln82. At Tyr83 to Leu409 the chain is on the mitochondrial intermembrane side. Catalysis depends on charge relay system; for autoendoproteolytic cleavage activity residues Asp191, His267, and Ser378. Residue Ser378 is the Schiff-base intermediate with substrate; via pyruvic acid; for decarboxylase activity of the active site. Ser378 is modified (pyruvic acid (Ser); by autocatalysis).

This sequence belongs to the phosphatidylserine decarboxylase family. PSD-B subfamily. Eukaryotic type I sub-subfamily. As to quaternary structure, heterodimer of a large membrane-associated beta subunit and a small pyruvoyl-containing alpha subunit. Requires pyruvate as cofactor. Is synthesized initially as an inactive proenzyme. Formation of the active enzyme involves a self-maturation process in which the active site pyruvoyl group is generated from an internal serine residue via an autocatalytic post-translational modification. Two non-identical subunits are generated from the proenzyme in this reaction, and the pyruvate is formed at the N-terminus of the alpha chain, which is derived from the carboxyl end of the proenzyme. The autoendoproteolytic cleavage occurs by a canonical serine protease mechanism, in which the side chain hydroxyl group of the serine supplies its oxygen atom to form the C-terminus of the beta chain, while the remainder of the serine residue undergoes an oxidative deamination to produce ammonia and the pyruvoyl prosthetic group on the alpha chain. During this reaction, the Ser that is part of the protease active site of the proenzyme becomes the pyruvoyl prosthetic group, which constitutes an essential element of the active site of the mature decarboxylase.

Its subcellular location is the mitochondrion inner membrane. It is found in the cytoplasm. The protein localises to the lipid droplet. The catalysed reaction is a 1,2-diacyl-sn-glycero-3-phospho-L-serine + H(+) = a 1,2-diacyl-sn-glycero-3-phosphoethanolamine + CO2. It functions in the pathway phospholipid metabolism; phosphatidylethanolamine biosynthesis. In terms of biological role, catalyzes the formation of phosphatidylethanolamine (PtdEtn) from phosphatidylserine (PtdSer). Plays a central role in phospholipid metabolism and in the interorganelle trafficking of phosphatidylserine. May be involved in lipid droplet biogenesis at the endoplasmic reticulum membrane. This chain is Phosphatidylserine decarboxylase proenzyme, mitochondrial, found in Homo sapiens (Human).